Reading from the N-terminus, the 420-residue chain is Tyrosine--tRNA ligase 1 (420 aa).

Y35 contributes to the L-tyrosine binding site. Positions 40-49 (PTAGSLHIGH) match the 'HIGH' region motif. Residues Y172 and Q176 each coordinate L-tyrosine. Residues 232 to 236 (KFGKT) carry the 'KMSKS' region motif. K235 serves as a coordination point for ATP. One can recognise an S4 RNA-binding domain in the interval 355–419 (INIAELLVKS…GKKQFRLIKL (65 aa)).

It belongs to the class-I aminoacyl-tRNA synthetase family. TyrS type 1 subfamily. In terms of assembly, homodimer.

Its subcellular location is the cytoplasm. The catalysed reaction is tRNA(Tyr) + L-tyrosine + ATP = L-tyrosyl-tRNA(Tyr) + AMP + diphosphate + H(+). Catalyzes the attachment of tyrosine to tRNA(Tyr) in a two-step reaction: tyrosine is first activated by ATP to form Tyr-AMP and then transferred to the acceptor end of tRNA(Tyr). In Pseudoalteromonas translucida (strain TAC 125), this protein is Tyrosine--tRNA ligase 1.